The following is a 196-amino-acid chain: Guanylate kinase (196 aa).

A disordered region spans residues 1–24 (MPVESGAGNDQPKRLTVLSGPSGV). Residues 13–191 (KRLTVLSGPS…VCDELLALIA (179 aa)) form the Guanylate kinase-like domain. 20–27 (GPSGVGKS) lines the ATP pocket.

It belongs to the guanylate kinase family.

The protein resides in the cytoplasm. It catalyses the reaction GMP + ATP = GDP + ADP. In terms of biological role, essential for recycling GMP and indirectly, cGMP. In Thermobifida fusca (strain YX), this protein is Guanylate kinase.